An 847-amino-acid chain; its full sequence is Alanine--tRNA ligase (847 aa).

The Zn(2+) site is built by His-554, His-558, Cys-656, and His-660.

This sequence belongs to the class-II aminoacyl-tRNA synthetase family. Zn(2+) is required as a cofactor.

The protein resides in the cytoplasm. The enzyme catalyses tRNA(Ala) + L-alanine + ATP = L-alanyl-tRNA(Ala) + AMP + diphosphate. Catalyzes the attachment of alanine to tRNA(Ala) in a two-step reaction: alanine is first activated by ATP to form Ala-AMP and then transferred to the acceptor end of tRNA(Ala). Also edits incorrectly charged Ser-tRNA(Ala) and Gly-tRNA(Ala) via its editing domain. This chain is Alanine--tRNA ligase, found in Helicobacter acinonychis (strain Sheeba).